A 423-amino-acid chain; its full sequence is L-cysteine:1D-myo-inositol 2-amino-2-deoxy-alpha-D-glucopyranoside ligase (423 aa).

Cys-45 contributes to the Zn(2+) binding site. Residues 45–48, Thr-60, and 83–85 each bind L-cysteinyl-5'-AMP; these read CGIT and NVT. The 'HIGH' region motif lies at 47 to 57; it reads ITPYDATHIGH. Positions 197-202 match the 'ERGGDP' region motif; sequence DRGGDP. Trp-238 lines the L-cysteinyl-5'-AMP pocket. A Zn(2+)-binding site is contributed by Cys-242. 260-262 provides a ligand contact to L-cysteinyl-5'-AMP; sequence GSD. Position 267 (His-267) interacts with Zn(2+). L-cysteinyl-5'-AMP is bound at residue Ile-294. Residues 300–304 carry the 'KMSKS' region motif; that stretch reads KMSKS.

It belongs to the class-I aminoacyl-tRNA synthetase family. MshC subfamily. Monomer. The cofactor is Zn(2+).

The enzyme catalyses 1D-myo-inositol 2-amino-2-deoxy-alpha-D-glucopyranoside + L-cysteine + ATP = 1D-myo-inositol 2-(L-cysteinylamino)-2-deoxy-alpha-D-glucopyranoside + AMP + diphosphate + H(+). Catalyzes the ATP-dependent condensation of GlcN-Ins and L-cysteine to form L-Cys-GlcN-Ins. The polypeptide is L-cysteine:1D-myo-inositol 2-amino-2-deoxy-alpha-D-glucopyranoside ligase (Jonesia denitrificans (strain ATCC 14870 / DSM 20603 / BCRC 15368 / CIP 55.134 / JCM 11481 / NBRC 15587 / NCTC 10816 / Prevot 55134) (Listeria denitrificans)).